A 266-amino-acid polypeptide reads, in one-letter code: Receptor-like protein 5 (266 aa).

Residues 1–19 form the signal peptide; that stretch reads MINYRHIVFCLCVMVVVDS. The Extracellular portion of the chain corresponds to 20–169; the sequence is RLTPYLAAIE…PTRNKNKPTV (150 aa). LRR repeat units follow at residues 93–117 and 119–143; these read LTSL…ITKL and NLTI…IVIL. Residue Asn119 is glycosylated (N-linked (GlcNAc...) asparagine). The helical transmembrane segment at 170–190 threads the bilayer; that stretch reads LVLLLGILVGLVVAGGASFGF. Over 191–266 the chain is Cytoplasmic; that stretch reads YLYRIRKQPK…TNQNPHLPYM (76 aa).

This sequence belongs to the RLP family.

It is found in the cell membrane. This is Receptor-like protein 5 from Arabidopsis thaliana (Mouse-ear cress).